The primary structure comprises 257 residues: NAD kinase (257 aa).

The Proton acceptor role is filled by Asp44. NAD(+)-binding positions include 44–45 (DG), Arg49, 116–117 (NE), Asp146, Ala154, and 157–162 (TAYNLS).

This sequence belongs to the NAD kinase family. A divalent metal cation serves as cofactor.

The protein localises to the cytoplasm. The catalysed reaction is NAD(+) + ATP = ADP + NADP(+) + H(+). Involved in the regulation of the intracellular balance of NAD and NADP, and is a key enzyme in the biosynthesis of NADP. Catalyzes specifically the phosphorylation on 2'-hydroxyl of the adenosine moiety of NAD to yield NADP. This chain is NAD kinase, found in Rhizorhabdus wittichii (strain DSM 6014 / CCUG 31198 / JCM 15750 / NBRC 105917 / EY 4224 / RW1) (Sphingomonas wittichii).